Consider the following 1368-residue polypeptide: DNA-directed RNA polymerase subunit beta (1368 aa).

The protein belongs to the RNA polymerase beta chain family. The RNAP catalytic core consists of 2 alpha, 1 beta, 1 beta' and 1 omega subunit. When a sigma factor is associated with the core the holoenzyme is formed, which can initiate transcription.

The catalysed reaction is RNA(n) + a ribonucleoside 5'-triphosphate = RNA(n+1) + diphosphate. In terms of biological role, DNA-dependent RNA polymerase catalyzes the transcription of DNA into RNA using the four ribonucleoside triphosphates as substrates. This is DNA-directed RNA polymerase subunit beta from Burkholderia ambifaria (strain ATCC BAA-244 / DSM 16087 / CCUG 44356 / LMG 19182 / AMMD) (Burkholderia cepacia (strain AMMD)).